Here is a 1145-residue protein sequence, read N- to C-terminus: Protein sumv-2 (1145 aa).

Residues M1–R13 show a composition bias toward basic residues. 5 disordered regions span residues M1–A310, Q429–R464, H999–E1025, Q1040–E1059, and I1073–I1145. Positions A14 to K34 are enriched in polar residues. 2 stretches are compositionally biased toward basic and acidic residues: residues K73 to K104 and V216 to D225. Residues A226–R248 are compositionally biased toward low complexity. The segment covering G455–R464 has biased composition (basic and acidic residues). The segment covering H999–S1013 has biased composition (low complexity). Residues V1091–P1102 are compositionally biased toward basic and acidic residues. Residues Q1121 to P1136 are compositionally biased toward pro residues.

Functionally, influences the activity of genes involved in vulval development. This chain is Protein sumv-2, found in Caenorhabditis elegans.